Reading from the N-terminus, the 116-residue chain is Large ribosomal subunit protein bL17 (116 aa).

This sequence belongs to the bacterial ribosomal protein bL17 family. In terms of assembly, part of the 50S ribosomal subunit. Contacts protein L32.

The protein is Large ribosomal subunit protein bL17 of Synechococcus elongatus (strain ATCC 33912 / PCC 7942 / FACHB-805) (Anacystis nidulans R2).